Here is a 429-residue protein sequence, read N- to C-terminus: MNHSRSHALFAQAQTLLPGGVNSPVRAFKSVGGEPFFVARADGPYLFDVDDNRYIDYVGSWGPMIAGHNHPAVREAVEQSIRNGLSFGAPCAAEVAMAQTITRLVPSCEMVRMVNSGTEATLSAVRLARGATGRNRIIKFEGCYHGHGDSFLVKAGSGMLTLGVPTSPGVPAGLSELTATLSFNDFEGATALFDEIGAEVAAVIIEPVVGNANCIPPQAGYLQHLRTLCTRHGALLIFDEVMTGFRVALGGAQAHYGVTPDLTTFGKIIGGGMPVGAYGGRRDLMEQVAPAGPIYQAGTLSGNPVAMAAGLAMLELVQEPGFHTRLSEATSMLCEGLEDAARAAGIAVTTNQVGGMFGLFFTDDIVESYAQATACDITTFNRFFHAMLQQGVYLAPSAYEAGFMSSAHDEAVIDATLAAAREAFAEVAR.

Lysine 267 is modified (N6-(pyridoxal phosphate)lysine).

This sequence belongs to the class-III pyridoxal-phosphate-dependent aminotransferase family. HemL subfamily. Homodimer. Pyridoxal 5'-phosphate serves as cofactor.

Its subcellular location is the cytoplasm. It catalyses the reaction (S)-4-amino-5-oxopentanoate = 5-aminolevulinate. It participates in porphyrin-containing compound metabolism; protoporphyrin-IX biosynthesis; 5-aminolevulinate from L-glutamyl-tRNA(Glu): step 2/2. The chain is Glutamate-1-semialdehyde 2,1-aminomutase from Xanthomonas axonopodis pv. citri (strain 306).